A 494-amino-acid polypeptide reads, in one-letter code: MPNNTLQHTEAPTYRVVTYGCQMNVHDSERIAGLLEEAGYVPDPRTDTLAPADVVVFNTCAVRENADNRLYGTLGHMAAVKSAHPGMQLAVGGCMAQKDKDTVVARAPWVDVVFGTHNVGSLPVLLKRARHNATAQVEIEESLVTFPSNLPARRDSAYSAWVSISVGCNNTCTFCIVPQLRGKETDRRPGEILSEIRALVNEGVQEITLLGQNVNSYGVQFGDRGAFAKLLRACGNIDGLERVRFTSPHPAAFTDDVIEAMAETPNVMPSLHMPLQSGSDEVLRRMRRSYRSTKFLGILDRVREAIPHAAITTDIIVGFPGETDKDFAETMRIVEESRFSAAFTFQYSIRPNTPAGVMKDQVPKPVVQERYEQLVELVDDIAWQENKAQVGRAVEVMFAQGEGRKDEATHRVTGRARDNRLVHVSLNPGDDVPRPGDIGEVVITSGHPHHLVADGGLVNLRRTRGGDAWHARQGQVSQGTPTVLGLPTVGVPRH.

The region spanning 12–131 is the MTTase N-terminal domain; that stretch reads PTYRVVTYGC…LPVLLKRARH (120 aa). 6 residues coordinate [4Fe-4S] cluster: C21, C60, C94, C168, C172, and C175. The Radical SAM core domain maps to 154-385; it reads RDSAYSAWVS…ELVDDIAWQE (232 aa). The region spanning 387 to 457 is the TRAM domain; sequence KAQVGRAVEV…PHHLVADGGL (71 aa).

It belongs to the methylthiotransferase family. MiaB subfamily. Monomer. It depends on [4Fe-4S] cluster as a cofactor.

It is found in the cytoplasm. It carries out the reaction N(6)-dimethylallyladenosine(37) in tRNA + (sulfur carrier)-SH + AH2 + 2 S-adenosyl-L-methionine = 2-methylsulfanyl-N(6)-dimethylallyladenosine(37) in tRNA + (sulfur carrier)-H + 5'-deoxyadenosine + L-methionine + A + S-adenosyl-L-homocysteine + 2 H(+). Its function is as follows. Catalyzes the methylthiolation of N6-(dimethylallyl)adenosine (i(6)A), leading to the formation of 2-methylthio-N6-(dimethylallyl)adenosine (ms(2)i(6)A) at position 37 in tRNAs that read codons beginning with uridine. The chain is tRNA-2-methylthio-N(6)-dimethylallyladenosine synthase from Cutibacterium acnes (strain DSM 16379 / KPA171202) (Propionibacterium acnes).